The chain runs to 970 residues: MRFKKRFSLDWILKIGTILGLVCLGLFGVIFGSYKLLNDSRLGAVFNGSTTTTVYFLNHKSTNNTSLDPQQTKPTNGIENITNIDSFLDGVEKSYANSLFIQGFSSVNITKNTNDKTASELDNIDKSWLVNGGLPSVTLTFEQNREQAKTRQRKRQVDAQVRRNAISSVEHNYQLSLETTDGVVLFDSLDNNFINASIRAVVPQNTSVNSALTFEYKLNKNVVTKESLHTDFLDFINSKNLSSSDYNTGNGQASVEGNGKFFKQNANGTSSSGNKTLVLWKDKQGALNYVRNIFNVVEGSSDYLTFNEREKSLWEFLHAKGSFASGDNLFLNTDANGASPIKKASDITLKNLYYIYAAPNHFSAVASNSNDNNNQNNNNNNNSSDVITVSNSADTRKLRSADSSGFSGLFHNYIISEIRTEDPVSKTGDPVKINPTLQSFLDTNNQRIEYGGNIKFQVGNFLSSDGTYTPPNFVTAATVKELLTNPFPTAATIATAKTSLVNAPLANTITDVSNFASSFIAFGIIVLIAAVLLTLRYKLLGLYKALALGLSVVSSLVIFSAVGGVVDVFSFVGIFFVIAINLINLLNLGELFLRNIRNNASIIESWKLCLKRSFFANLEFHITWLISALVVIYLSNYQVQQLANLMAISAITSYFFSYGISIVLISLFVSSESGANWKLFLYQKDAKALTKTSSNYSLLSSTSDLNTDFFITKNQHDFFLKNNWKFLFVWLILLAIGVVMLVLYLVQPNLLGEFLAADVESSNGIIAGIGIVSLLYLAYCLIRYGVAYCLSYLVSFILLCSGLFAVMYLTNYLFSIDQSTIQLITFVYLFWLFFAAKVSQTTTWTYFYWFKRSLKDKVFIKNLFNDNFNSQWKIDLIESSSLVFIFIIYSGFNFGGIDGNFNLVIFYLIAIVGLFDVATAFLPMFCFGLINGWLSPFNYVHSRLSLKHKKHPFKEIDQIEEQLIAGINSF.

A helical transmembrane segment spans residues 11-31 (WILKIGTILGLVCLGLFGVIF). The interval 366–387 (ASNSNDNNNQNNNNNNNSSDVI) is disordered. Low complexity predominate over residues 367–387 (SNSNDNNNQNNNNNNNSSDVI). A run of 11 helical transmembrane segments spans residues 515–535 (FASS…LLTL), 537–557 (YKLL…SSLV), 558–578 (IFSA…FFVI), 614–634 (FFAN…VIYL), 645–665 (LMAI…IVLI), 726–746 (FLFV…LYLV), 762–782 (SNGI…YCLI), 789–809 (CLSY…VMYL), 816–836 (IDQS…FFAA), 877–897 (IESS…FGGI), and 903–923 (LVIF…AFLP).

Its subcellular location is the cell membrane. This is an uncharacterized protein from Mycoplasma genitalium (strain ATCC 33530 / DSM 19775 / NCTC 10195 / G37) (Mycoplasmoides genitalium).